The sequence spans 528 residues: DNA damage-binding protein cmr1 (528 aa).

Disordered stretches follow at residues 32–98 (AQSS…QYEA) and 217–243 (DASQEKPTSAVKQEDDEEDAEDDDPDP). Residues 52 to 62 (KPKKKPPPKKV) are compositionally biased toward basic residues. The stretch at 185–226 (LTPERIYTMTFHPSEAKPLIFAGDKMGNLGVLDASQEKPTSA) is one WD 1 repeat. Residues 230–242 (EDDEEDAEDDDPD) are compositionally biased toward acidic residues. 6 WD repeats span residues 250 to 290 (PHTR…SVEK), 297 to 337 (SDDI…RSAV), 342 to 382 (LSEK…HDDP), 389 to 428 (VSRLSVSHAAFNSAGQIATSSYDDTLKIYDFGSKGIAAWE), 451 to 494 (GRWV…LAQL), and 497 to 528 (DGITAVPAVAVFHCSTNWIAGGTASGKICLWM).

It belongs to the WD repeat DDB2/WDR76 family.

In terms of biological role, DNA-binding protein that binds to both single- and double-stranded DNA. Binds preferentially to UV-damaged DNA. May be involved in DNA-metabolic processes. The chain is DNA damage-binding protein cmr1 from Aspergillus fumigatus (strain CBS 144.89 / FGSC A1163 / CEA10) (Neosartorya fumigata).